The sequence spans 483 residues: Protein adenylyltransferase Fic (483 aa).

A helical transmembrane segment spans residues 20-42 (AFFFIAGSLATFVFHALTSSSSV). 2 TPR repeats span residues 107–140 (ALGA…APKH) and 141–175 (PEVL…SPSN). The short motif at 232–237 (SVGIEG) is the Inhibitory (S/T)XXXE(G/N) motif element. ATP contacts are provided by residues E236 and 317-320 (VGGH). The region spanning 286–421 (ITLKDILELH…IRPFVRFIAD (136 aa)) is the Fido domain. H364 is a catalytic residue. ATP is bound by residues 368 to 375 (DGNGRTSR), 400 to 401 (YY), and N408. Residues 464 to 483 (SAPEPYESGSGLDSGVNGMP) form a disordered region.

This sequence belongs to the fic family. As to quaternary structure, homodimer.

Its subcellular location is the membrane. It carries out the reaction L-tyrosyl-[protein] + ATP = O-(5'-adenylyl)-L-tyrosyl-[protein] + diphosphate. The enzyme catalyses L-threonyl-[protein] + ATP = 3-O-(5'-adenylyl)-L-threonyl-[protein] + diphosphate. It catalyses the reaction 3-O-(5'-adenylyl)-L-threonyl-[protein] + H2O = L-threonyl-[protein] + AMP + H(+). The side chain of Glu-236 determines which of the two opposing activities (AMPylase or de-AMPylase) will take place. In response to endoplasmic reticulum stress, mediates de-AMPylase activity. Adenylyltransferase activity is inhibited by the inhibitory helix present at the N-terminus: Glu-236 binds ATP and competes with ATP-binding at Arg-375, thereby preventing adenylyltransferase activity. In unstressed cells, disengagement of Glu-236 promotes adenylyltransferase activity. Activation dissociates ATP-binding from Glu-236, allowing ordered binding of the entire ATP moiety with the alpha-phosphate in an orientation that is productive for accepting an incoming target hydroxyl side chain. Its function is as follows. Protein that can both mediate the addition of adenosine 5'-monophosphate (AMP) to specific residues of target proteins (AMPylation), and the removal of the same modification from target proteins (de-AMPylation), depending on the context. The side chain of Glu-236 determines which of the two opposing activities (AMPylase or de-AMPylase) will take place. Acts as a key regulator of the unfolded protein response (UPR) by mediating AMPylation or de-AMPylation of Hsc70-3/BiP. In unstressed cells, acts as an adenylyltransferase by mediating AMPylation of Hsc70-3/BiP at 'Thr-518', thereby inactivating it. In response to endoplasmic reticulum stress, acts as a phosphodiesterase by mediating removal of ATP (de-AMPylation) from Hsc70-3/BiP at 'Thr-518', leading to restore HSPA5/BiP activity. This Drosophila grimshawi (Hawaiian fruit fly) protein is Protein adenylyltransferase Fic.